Here is a 153-residue protein sequence, read N- to C-terminus: Large ribosomal subunit protein uL15 (153 aa).

The interval 1 to 42 (MKLNTIKPGIGSAKPKRRVGRGIGSGLGKTCGRGHKGQKSRA) is disordered. Gly residues predominate over residues 21–31 (RGIGSGLGKTC).

This sequence belongs to the universal ribosomal protein uL15 family. In terms of assembly, part of the 50S ribosomal subunit.

Its function is as follows. Binds to the 23S rRNA. The sequence is that of Large ribosomal subunit protein uL15 from Nitrosomonas europaea (strain ATCC 19718 / CIP 103999 / KCTC 2705 / NBRC 14298).